Reading from the N-terminus, the 578-residue chain is ATP-dependent RNA helicase has-1 (578 aa).

Residues 1–91 are disordered; that stretch reads MASEFSKKRK…KDAEAGDELT (91 aa). Basic and acidic residues predominate over residues 13-26; it reads DAKIATEDGAATDK. Positions 27–36 are enriched in basic residues; that stretch reads KTKKVKKDKK. 2 stretches are compositionally biased toward acidic residues: residues 43 to 54 and 77 to 88; these read EVVEDATPEEEN and EDSDDKDAEAGD. Positions 107 to 135 match the Q motif motif; the sequence is TDFSELNLSDKTMKAIAEMGFTKMTEIQR. Positions 138-313 constitute a Helicase ATP-binding domain; it reads IPPLLAGKDV…RISLRPGPLY (176 aa). Residue 151–158 coordinates ATP; the sequence is AKTGSGKT. A DEAD box motif is present at residues 260–263; that stretch reads DEAD. The Bipartite nuclear localization signal signature appears at 339 to 355; sequence KRFLLLFSFLKKMQKKK. A Helicase C-terminal domain is found at 343 to 497; that stretch reads LLFSFLKKMQ…NVQSQLEKLI (155 aa). The tract at residues 556–578 is disordered; the sequence is SMSRDKKQTSRRAYGSQPKQNRH.

It belongs to the DEAD box helicase family. DDX18/HAS1 subfamily. Associates in the nucleolus with the 60S and pre-60S ribosomal subunits.

The protein localises to the nucleus. Its subcellular location is the nucleolus. The enzyme catalyses ATP + H2O = ADP + phosphate + H(+). Functionally, ATP-dependent RNA helicase involved in 40S ribosomal subunit biogenesis. Required for the processing and cleavage of 35S pre-rRNA at sites A0, A1, and A2, leading to mature 18S rRNA. In Neurospora crassa (strain ATCC 24698 / 74-OR23-1A / CBS 708.71 / DSM 1257 / FGSC 987), this protein is ATP-dependent RNA helicase has-1 (has-1).